The following is a 192-amino-acid chain: Ribose 1,5-bisphosphate phosphokinase PhnN (192 aa).

15–22 (GPSGAGKD) contacts ATP.

The protein belongs to the ribose 1,5-bisphosphokinase family.

The catalysed reaction is alpha-D-ribose 1,5-bisphosphate + ATP = 5-phospho-alpha-D-ribose 1-diphosphate + ADP. It functions in the pathway metabolic intermediate biosynthesis; 5-phospho-alpha-D-ribose 1-diphosphate biosynthesis; 5-phospho-alpha-D-ribose 1-diphosphate from D-ribose 5-phosphate (route II): step 3/3. Its function is as follows. Catalyzes the phosphorylation of ribose 1,5-bisphosphate to 5-phospho-D-ribosyl alpha-1-diphosphate (PRPP). The polypeptide is Ribose 1,5-bisphosphate phosphokinase PhnN (Brucella melitensis biotype 2 (strain ATCC 23457)).